Consider the following 157-residue polypeptide: NudC domain-containing protein 2 (157 aa).

The residue at position 2 (serine 2) is an N-acetylserine. The 91-residue stretch at 14–104 folds into the CS domain; sequence CATPWGQWYQ…DAANCWTSLL (91 aa). The interval 134-157 is disordered; it reads FDFSGAEISGNYTKGGPDFSNLEK. A Phosphoserine modification is found at serine 142. At tyrosine 145 the chain carries Phosphotyrosine.

Interacts with LIS1.

Its subcellular location is the chromosome. It is found in the centromere. The protein localises to the kinetochore. It localises to the cytoplasm. The protein resides in the cytoskeleton. Its subcellular location is the microtubule organizing center. It is found in the centrosome. The protein localises to the spindle pole. In terms of biological role, may regulate the LIS1/dynein pathway by stabilizing LIS1 with Hsp90 chaperone. This Rattus norvegicus (Rat) protein is NudC domain-containing protein 2 (Nudcd2).